Here is a 635-residue protein sequence, read N- to C-terminus: Extracellular metalloproteinase MEP (635 aa).

Positions methionine 1–alanine 19 are cleaved as a signal peptide. Residues histidine 20–histidine 242 constitute a propeptide that is removed on maturation. Position 428 (histidine 428) interacts with Zn(2+). Glutamate 429 is an active-site residue. Histidine 432 is a Zn(2+) binding site. N-linked (GlcNAc...) asparagine glycosylation is present at asparagine 473.

The protein belongs to the peptidase M36 family. Requires Zn(2+) as cofactor.

It is found in the secreted. In terms of biological role, secreted metalloproteinase that allows assimilation of proteinaceous substrates. The protein is Extracellular metalloproteinase MEP (MEP) of Pyricularia oryzae (strain 70-15 / ATCC MYA-4617 / FGSC 8958) (Rice blast fungus).